A 209-amino-acid chain; its full sequence is ATP phosphoribosyltransferase (209 aa).

It belongs to the ATP phosphoribosyltransferase family. Short subfamily. In terms of assembly, heteromultimer composed of HisG and HisZ subunits.

The protein resides in the cytoplasm. It catalyses the reaction 1-(5-phospho-beta-D-ribosyl)-ATP + diphosphate = 5-phospho-alpha-D-ribose 1-diphosphate + ATP. It functions in the pathway amino-acid biosynthesis; L-histidine biosynthesis; L-histidine from 5-phospho-alpha-D-ribose 1-diphosphate: step 1/9. In terms of biological role, catalyzes the condensation of ATP and 5-phosphoribose 1-diphosphate to form N'-(5'-phosphoribosyl)-ATP (PR-ATP). Has a crucial role in the pathway because the rate of histidine biosynthesis seems to be controlled primarily by regulation of HisG enzymatic activity. The protein is ATP phosphoribosyltransferase of Caldicellulosiruptor saccharolyticus (strain ATCC 43494 / DSM 8903 / Tp8T 6331).